Reading from the N-terminus, the 655-residue chain is MEVAMVSAESSGCNSHMPYGYAAQARARERERLAHSRAAAAAAVAAATAAVEGTGGSGGGPHHHHQTRGAYSSHDPQGSRGSREEEATRTEKKKKLHHRQSSFPHCSDLMPSGSEEKILRELSEEEEDEEEEEEEEEEGRFYYSEEDHGDGCSYTDLLPQDDGGGGGYSSVRYSDCCERVVINVSGLRFETQMKTLAQFPETLLGDPEKRTQYFDPLRNEYFFDRNRPSFDAILYYYQSGGRLKRPVNVPFDIFTEEVKFYQLGEEALLKFREDEGFVREEEDRALPENEFKKQIWLLFEYPESSSPARGIAIVSVLVILISIVIFCLETLPEFRDDRDLIMALSAGGHSRLLNDTSAPHLENSGHTIFNDPFFIVETVCIVWFSFEFVVRCFACPSQALFFKNIMNIIDIVSILPYFITLGTDLAQQQGGGNGQQQQAMSFAILRIIRLVRVFRIFKLSRHSKGLQILGHTLRASMRELGLLIFFLFIGVILFSSAVYFAEADEPTTHFQSIPDAFWWAVVTMTTVGYGDMKPITVGGKIVGSLCAIAGVLTIALPVPVIVSNFNYFYHRETENEEQTQLTQNAVSCPYLPSNLLKKFRSSTSSSLGDKSEYLEMEEGVKESLCGKEEKCQGKGDDSETDKNNCSNAKAVETDV.

The Cytoplasmic portion of the chain corresponds to 1-306 (MEVAMVSAES…LLFEYPESSS (306 aa)). The segment at 24–153 (QARARERERL…SEEDHGDGCS (130 aa)) is disordered. A compositionally biased stretch (low complexity) spans 36 to 50 (SRAAAAAAVAAATAA). Over residues 81-90 (GSREEEATRT) the composition is skewed to basic and acidic residues. A compositionally biased stretch (basic residues) spans 91-100 (EKKKKLHHRQ). Residue serine 123 is modified to Phosphoserine. Residues 123 to 138 (SEEEEDEEEEEEEEEE) are compositionally biased toward acidic residues. The segment covering 139–150 (GRFYYSEEDHGD) has biased composition (basic and acidic residues). The chain crosses the membrane as a helical span at residues 307-328 (PARGIAIVSVLVILISIVIFCL). Residues 329–372 (ETLPEFRDDRDLIMALSAGGHSRLLNDTSAPHLENSGHTIFNDP) lie on the Extracellular side of the membrane. The N-linked (GlcNAc...) asparagine glycan is linked to asparagine 354. A helical transmembrane segment spans residues 373–394 (FFIVETVCIVWFSFEFVVRCFA). Topologically, residues 395–405 (CPSQALFFKNI) are cytoplasmic. Residues 406–426 (MNIIDIVSILPYFITLGTDLA) traverse the membrane as a helical segment. At 427–441 (QQQGGGNGQQQQAMS) the chain is on the extracellular side. A helical; Voltage-sensor transmembrane segment spans residues 442 to 462 (FAILRIIRLVRVFRIFKLSRH). At 463–477 (SKGLQILGHTLRASM) the chain is on the cytoplasmic side. The tract at residues 464–477 (KGLQILGHTLRASM) is S4-S5 linker. Residues 478–499 (RELGLLIFFLFIGVILFSSAVY) traverse the membrane as a helical segment. The Extracellular portion of the chain corresponds to 500–513 (FAEADEPTTHFQSI). The segment at residues 514-525 (PDAFWWAVVTMT) is an intramembrane region (helical). The Selectivity filter motif lies at 526 to 531 (TVGYGD). Residues 526-533 (TVGYGDMK) lie within the membrane without spanning it. Residues 534–540 (PITVGGK) are Extracellular-facing. The chain crosses the membrane as a helical span at residues 541–569 (IVGSLCAIAGVLTIALPVPVIVSNFNYFY). Residues 570-655 (HRETENEEQT…SNAKAVETDV (86 aa)) lie on the Cytoplasmic side of the membrane. The residue at position 601 (serine 601) is a Phosphoserine; by PKA. Basic and acidic residues predominate over residues 631 to 642 (CQGKGDDSETDK). Residues 631 to 655 (CQGKGDDSETDKNNCSNAKAVETDV) are disordered. A PDZ-binding motif is present at residues 653 to 655 (TDV).

The protein belongs to the potassium channel family. A (Shaker) (TC 1.A.1.2) subfamily. Kv1.4/KCNA4 sub-subfamily. In terms of assembly, homotetramer and heterotetramer of potassium channel proteins. Interacts with KCNAB1 and KCNAB2. Interacts with DLG1, DLG2 and DLG4 via their PDZ domains. Interacts with SIGMAR1. Part of a complex containing KCNA1, KCNAB1 and LGI1. Detected in a complex with KCNA1. Interacts with KCNA2. Interacts (via cytoplasmic N-terminal domain) with KCNRG. N-glycosylated. As to expression, detected in brain (at protein level). Heart and brain.

The protein localises to the cell membrane. It localises to the cell projection. Its subcellular location is the axon. It carries out the reaction K(+)(in) = K(+)(out). In terms of biological role, voltage-gated potassium channel that mediates transmembrane potassium transport in excitable membranes. Forms tetrameric potassium-selective channels through which potassium ions pass in accordance with their electrochemical gradient. The channel alternates between opened and closed conformations in response to the voltage difference across the membrane. Can form functional homotetrameric channels and heterotetrameric channels that contain variable proportions of KCNA1, KCNA2, KCNA4, KCNA5, and possibly other family members as well; channel properties depend on the type of alpha subunits that are part of the channel. Channel properties are modulated by cytoplasmic beta subunits that regulate the subcellular location of the alpha subunits and promote rapid inactivation. In vivo, membranes probably contain a mixture of heteromeric potassium channel complexes, making it difficult to assign currents observed in intact tissues to any particular potassium channel family member. Homotetrameric KCNA4 forms a potassium channel that opens in response to membrane depolarization, followed by rapid spontaneous channel closure. Likewise, a heterotetrameric channel formed by KCNA1 and KCNA4 shows rapid inactivation. The protein is Potassium voltage-gated channel subfamily A member 4 (Kcna4) of Rattus norvegicus (Rat).